Consider the following 325-residue polypeptide: Pseudouridylate synthase TRUB2, mitochondrial (325 aa).

The active-site Nucleophile is the Asp-101. Residues 292–325 (QTEGVSRGNPDREAAEGPIPGPSRGAEGEGELRA) form a disordered region.

Belongs to the pseudouridine synthase TruB family.

Its subcellular location is the mitochondrion matrix. It carries out the reaction a uridine in mRNA = a pseudouridine in mRNA. It catalyses the reaction uridine(55) in tRNA = pseudouridine(55) in tRNA. Functionally, minor enzyme contributing to the isomerization of uridine to pseudouridine (pseudouridylation) of specific mitochondrial mRNAs (mt-mRNAs) such as COXI and COXIII mt-mRNAs, modulating the efficiency of mitochondrial protein synthesis without changes in transcript abundance or stability. Also catalyzes pseudouridylation of some tRNAs, including synthesis of pseudouridine(55) from uracil-55, in the psi GC loop of a subset of tRNAs. This chain is Pseudouridylate synthase TRUB2, mitochondrial, found in Xenopus tropicalis (Western clawed frog).